We begin with the raw amino-acid sequence, 422 residues long: m7GpppN-mRNA hydrolase (422 aa).

The 132-residue stretch at 95–226 (MGVPTYGAII…KLGLAPNKFF (132 aa)) folds into the Nudix hydrolase domain. Residues 129-150 (GKVNKEEAPHDCAAREVFEETG) carry the Nudix box motif. The Mn(2+) site is built by glutamate 144 and glutamate 148. Serine 246, serine 247, serine 249, serine 276, and serine 284 each carry phosphoserine. The tract at residues 247-347 (SDSDNGFSSA…GVHGQPAKQQ (101 aa)) is disordered. A compositionally biased stretch (low complexity) spans 249–258 (SDNGFSSAGS). Basic and acidic residues predominate over residues 303–312 (NHGEVSDLLK).

The protein belongs to the Nudix hydrolase family. DCP2 subfamily. Found in a mRNA decay complex with LSM1, LSM3, LSM4, EXOSC2, EXOSC4, EXOSC10, PARN, XRN1, CNOT6, UPF1, UPF2 and UPF3B. Forms a complex with DCP1A, EDC3, DDX6 and EDC4/HEDLS, within this complex directly interacts with EDC4/HEDLS. Interacts with DPC1B, UPF1, UPF2 and UPF3B. Associates with polysomes. Interacts (via N-terminus and C-terminus) with TRIM21 (via N-terminus and C-terminus). Interacts with LIMD1, WTIP and AJUBA. Interacts with DDX17 in an RNA-dependent manner. Interacts with ZC3HAV1. Interacts with APOBEC3G in an RNA-dependent manner. Interacts with ZFP36L1 (via N-terminus). Interacts with NBDY. The cofactor is Mn(2+). Requires Mg(2+) as cofactor. As to expression, strongly expressed in brain and testis. Weakly expressed in lung. Not detected in heart, liver, kidney and muscle (at protein level).

Its subcellular location is the cytoplasm. It is found in the P-body. The protein localises to the nucleus. The catalysed reaction is a 5'-end (N(7)-methyl 5'-triphosphoguanosine)-ribonucleoside in mRNA + H2O = N(7)-methyl-GDP + a 5'-end phospho-ribonucleoside in mRNA + 2 H(+). Decapping metalloenzyme that catalyzes the cleavage of the cap structure on mRNAs. Removes the 7-methyl guanine cap structure from mRNA molecules, yielding a 5'-phosphorylated mRNA fragment and 7m-GDP. Necessary for the degradation of mRNAs, both in normal mRNA turnover and in nonsense-mediated mRNA decay. Plays a role in replication-dependent histone mRNA degradation. Has higher activity towards mRNAs that lack a poly(A) tail. Has no activity towards a cap structure lacking an RNA moiety. The presence of a N(6)-methyladenosine methylation at the second transcribed position of mRNAs (N(6),2'-O-dimethyladenosine cap; m6A(m)) provides resistance to DCP2-mediated decapping. Blocks autophagy in nutrient-rich conditions by repressing the expression of ATG-related genes through degradation of their transcripts. This chain is m7GpppN-mRNA hydrolase (Dcp2), found in Mus musculus (Mouse).